The following is a 263-amino-acid chain: Small ribosomal subunit protein uS2 (263 aa).

The protein belongs to the universal ribosomal protein uS2 family.

In Roseiflexus castenholzii (strain DSM 13941 / HLO8), this protein is Small ribosomal subunit protein uS2.